Here is a 554-residue protein sequence, read N- to C-terminus: Urocanate hydratase (554 aa).

NAD(+) contacts are provided by residues 51–52 (GG), Gln-129, 175–177 (GMG), Glu-195, Arg-200, 241–242 (NA), 262–266 (QTSAH), 272–273 (YL), and Tyr-321. Residue Cys-409 is part of the active site. Residue Gly-491 coordinates NAD(+).

It belongs to the urocanase family. The cofactor is NAD(+).

The protein resides in the cytoplasm. The enzyme catalyses 4-imidazolone-5-propanoate = trans-urocanate + H2O. It participates in amino-acid degradation; L-histidine degradation into L-glutamate; N-formimidoyl-L-glutamate from L-histidine: step 2/3. Functionally, catalyzes the conversion of urocanate to 4-imidazolone-5-propionate. The chain is Urocanate hydratase from Caulobacter sp. (strain K31).